Consider the following 607-residue polypeptide: Polyadenylate-binding protein 1-like (607 aa).

RRM domains lie at Ser11–Arg89, Gly99–Ser175, Thr191–Lys268, and Val294–Arg370. One can recognise a PABC domain in the interval His523–Glu600.

Belongs to the polyadenylate-binding protein type-1 family. Expressed in ovary and testis.

It localises to the cytoplasm. Its function is as follows. Poly(A)-binding protein involved in oocyte maturation and early embryo development. It is required for cytosolic mRNA polyadenylation and translational activation of maternally stored mRNA in oocytes. This chain is Polyadenylate-binding protein 1-like, found in Mus musculus (Mouse).